Consider the following 179-residue polypeptide: Large ribosomal subunit protein uL5 (179 aa).

Belongs to the universal ribosomal protein uL5 family. In terms of assembly, part of the 50S ribosomal subunit; part of the 5S rRNA/L5/L18/L25 subcomplex. Contacts the 5S rRNA and the P site tRNA. Forms a bridge to the 30S subunit in the 70S ribosome.

In terms of biological role, this is one of the proteins that bind and probably mediate the attachment of the 5S RNA into the large ribosomal subunit, where it forms part of the central protuberance. In the 70S ribosome it contacts protein S13 of the 30S subunit (bridge B1b), connecting the 2 subunits; this bridge is implicated in subunit movement. Contacts the P site tRNA; the 5S rRNA and some of its associated proteins might help stabilize positioning of ribosome-bound tRNAs. The chain is Large ribosomal subunit protein uL5 from Burkholderia cenocepacia (strain HI2424).